Here is a 231-residue protein sequence, read N- to C-terminus: NADH-ubiquinone oxidoreductase chain 4 (231 aa).

Helical transmembrane passes span 1 to 21 (PIAG…YGII), 34 to 54 (TFLP…LTCL), 61 to 80 (SLIA…AIII), 84 to 106 (WGLS…LFCL), 118 to 138 (ILIL…WWLL), and 156 to 178 (LLIM…LSML).

The protein belongs to the complex I subunit 4 family.

It is found in the mitochondrion membrane. The enzyme catalyses a ubiquinone + NADH + 5 H(+)(in) = a ubiquinol + NAD(+) + 4 H(+)(out). Core subunit of the mitochondrial membrane respiratory chain NADH dehydrogenase (Complex I) that is believed to belong to the minimal assembly required for catalysis. Complex I functions in the transfer of electrons from NADH to the respiratory chain. The immediate electron acceptor for the enzyme is believed to be ubiquinone. The chain is NADH-ubiquinone oxidoreductase chain 4 (MT-ND4) from Trimeresurus albolabris (White-lipped pit viper).